The following is a 288-amino-acid chain: N-acetyltransferase ECO1 (288 aa).

The tract at residues 1 to 50 is disordered; that stretch reads MKRDITQLLSPELSQSSSRNDKKRKPTNSNKKVQTVLNFPSSSPNASQST. A compositionally biased stretch (low complexity) spans 7 to 18; it reads QLLSPELSQSSS. Residues 27-50 are compositionally biased toward polar residues; the sequence is TNSNKKVQTVLNFPSSSPNASQST. The CCHH-type zinc finger occupies 50–74; sequence TTCPTCGMTYYSHVSKDNDVHNKYH.

It belongs to the acetyltransferase family. ECO subfamily.

The protein localises to the nucleus. Its function is as follows. Probable acetyltransferase required for the establishment of sister chromatid cohesion and couple the processes of cohesion and DNA replication to ensure that only sister chromatids become paired together. In contrast to the structural cohesins, the deposition and establishment factors are required only during S phase. Acts by acetylating the cohesin complex component SMC3. In Debaryomyces hansenii (strain ATCC 36239 / CBS 767 / BCRC 21394 / JCM 1990 / NBRC 0083 / IGC 2968) (Yeast), this protein is N-acetyltransferase ECO1 (ECO1).